Consider the following 155-residue polypeptide: Pathogenesis-related protein STH-2 (155 aa).

This sequence belongs to the BetVI family.

This is Pathogenesis-related protein STH-2 (STH-2) from Solanum tuberosum (Potato).